We begin with the raw amino-acid sequence, 369 residues long: Queuine tRNA-ribosyltransferase (369 aa).

The Proton acceptor role is filled by Asp-89. Substrate is bound by residues 89-93 (DSGGF), Asp-143, Gln-187, and Gly-214. The interval 245-251 (GVGTPED) is RNA binding. Asp-264 (nucleophile) is an active-site residue. Residues 269 to 273 (TRNAR) form an RNA binding; important for wobble base 34 recognition region. Residues Cys-302, Cys-304, Cys-307, and His-333 each contribute to the Zn(2+) site.

Belongs to the queuine tRNA-ribosyltransferase family. In terms of assembly, homodimer. Within each dimer, one monomer is responsible for RNA recognition and catalysis, while the other monomer binds to the replacement base PreQ1. Zn(2+) serves as cofactor.

It catalyses the reaction 7-aminomethyl-7-carbaguanine + guanosine(34) in tRNA = 7-aminomethyl-7-carbaguanosine(34) in tRNA + guanine. It participates in tRNA modification; tRNA-queuosine biosynthesis. Catalyzes the base-exchange of a guanine (G) residue with the queuine precursor 7-aminomethyl-7-deazaguanine (PreQ1) at position 34 (anticodon wobble position) in tRNAs with GU(N) anticodons (tRNA-Asp, -Asn, -His and -Tyr). Catalysis occurs through a double-displacement mechanism. The nucleophile active site attacks the C1' of nucleotide 34 to detach the guanine base from the RNA, forming a covalent enzyme-RNA intermediate. The proton acceptor active site deprotonates the incoming PreQ1, allowing a nucleophilic attack on the C1' of the ribose to form the product. After dissociation, two additional enzymatic reactions on the tRNA convert PreQ1 to queuine (Q), resulting in the hypermodified nucleoside queuosine (7-(((4,5-cis-dihydroxy-2-cyclopenten-1-yl)amino)methyl)-7-deazaguanosine). This Dechloromonas aromatica (strain RCB) protein is Queuine tRNA-ribosyltransferase.